The following is a 1006-amino-acid chain: MKLLSVCAIALLAAQAAGASIKHMLNGFTLMEHSDPAKRELLQKYVTWDEKSLFVNGERIMIFSGEVHPFRLPVPSLWLDVFQKIKALGFNCVSFYVDWALLEGKPGEYRAEGNFALEPFFDVAKQAGIYLLARPGPYINAEASGGGFPGWLQRVNGTLRTSDPAYLKATDNYIAHVAATIAKGQITNGGPVILYQPENEYSGACCDATFPDGDYMQYVIDQARNAGIVVPLINNDAWTGGHNAPGTGKGEVDIYGHDSYPLGFDCGHPSVWPKGNLPTTFRTDHLKQSPTTPYSLIEFQAGSFDPWGGPGFAACAALVNHEFERVFYKNDLSFGAAILNLYMTFGGTNWGNLGHPGGYTSYDYGSPLTESRNVTREKYSELKLIGNFVKASPSYLLATPGNLTTSGYADTADLTVTPLLGNGTGSYFVVRHTDYTSQASTPYKLSLPTSAGRLTVPQLGGTLTLNGRDSKIHVVDYNVAGTNIIYSTAEVFTWKNFGDSKVLILYGGPGEHHELAVSFKSDVQVVEGSNSEFKSKKVGDVAVVAWDVSPSRRIVQIGDLKIFLLDRNSVYNYWVPQLDKDDSSTGYSSEKTTASSIIVKAGYLVRTAYTKGSGLYLTADFNATTPVEVIGAPSNVRNLYINGEKTQFKTDKNGIWSTEVKYSAPKIKLPSMKDLDWKYLDTLQEVQSTYDDSAWPAADLDTTPNTLRPLTTPKSLYSSDYGFHTGYLIYRGHFVADGSETTFDVRTQGGSAFGSSVWLNESFLGSWTGLNANADYNSTYKLPQVEQGKNYVLTILIDTMGLNENWVVGTDEMKNPRGILSYKLSGRDASAITWKLTGNLGGEDYQDKIRGPLNEGGLYAERQGFHQPQPPSQKWKSASPLDGLSKPGIGFYTAQFDLDIPSGWDVPLYFNFGNSTKSAYRVQLYVNGYQYGKFVSNIGPQTSFPVPQGILNYQGTNWVALTLWALESDGAKLDDFELVNTTPVMTALSKIRPSKQPNYRQRKGAY.

The first 18 residues, 1-18 (MKLLSVCAIALLAAQAAG), serve as a signal peptide directing secretion. Positions 96, 140, 141, and 142 each coordinate substrate. N156 carries an N-linked (GlcNAc...) asparagine glycan. N199 lines the substrate pocket. Catalysis depends on E200, which acts as the Proton donor. C205 and C206 are oxidised to a cystine. Y260 lines the substrate pocket. C266 and C315 are oxidised to a cystine. E298 (nucleophile) is an active-site residue. Residue Y364 participates in substrate binding. Residues N373, N402, N422, N622, N760, N777, and N914 are each glycosylated (N-linked (GlcNAc...) asparagine).

Belongs to the glycosyl hydrolase 35 family.

It localises to the secreted. The catalysed reaction is Hydrolysis of terminal non-reducing beta-D-galactose residues in beta-D-galactosides.. Cleaves beta-linked terminal galactosyl residues from gangliosides, glycoproteins, and glycosaminoglycans. In Aspergillus fumigatus (strain CBS 144.89 / FGSC A1163 / CEA10) (Neosartorya fumigata), this protein is Probable beta-galactosidase A (lacA).